A 213-amino-acid polypeptide reads, in one-letter code: Orotate phosphoribosyltransferase (213 aa).

Lys26 lines the 5-phospho-alpha-D-ribose 1-diphosphate pocket. 34 to 35 (FF) provides a ligand contact to orotate. Residues 72–73 (YK), Arg99, Lys100, Lys103, His105, and 124–132 (DDVITAGTA) contribute to the 5-phospho-alpha-D-ribose 1-diphosphate site. Thr128 and Arg156 together coordinate orotate.

It belongs to the purine/pyrimidine phosphoribosyltransferase family. PyrE subfamily. Homodimer. The cofactor is Mg(2+).

The catalysed reaction is orotidine 5'-phosphate + diphosphate = orotate + 5-phospho-alpha-D-ribose 1-diphosphate. It functions in the pathway pyrimidine metabolism; UMP biosynthesis via de novo pathway; UMP from orotate: step 1/2. In terms of biological role, catalyzes the transfer of a ribosyl phosphate group from 5-phosphoribose 1-diphosphate to orotate, leading to the formation of orotidine monophosphate (OMP). This is Orotate phosphoribosyltransferase from Vibrio parahaemolyticus serotype O3:K6 (strain RIMD 2210633).